The chain runs to 197 residues: Peptide deformylase (197 aa).

C106 and H148 together coordinate Fe cation. E149 is a catalytic residue. A Fe cation-binding site is contributed by H152.

It belongs to the polypeptide deformylase family. The cofactor is Fe(2+).

It carries out the reaction N-terminal N-formyl-L-methionyl-[peptide] + H2O = N-terminal L-methionyl-[peptide] + formate. In terms of biological role, removes the formyl group from the N-terminal Met of newly synthesized proteins. Requires at least a dipeptide for an efficient rate of reaction. N-terminal L-methionine is a prerequisite for activity but the enzyme has broad specificity at other positions. This is Peptide deformylase from Mycobacteroides abscessus (strain ATCC 19977 / DSM 44196 / CCUG 20993 / CIP 104536 / JCM 13569 / NCTC 13031 / TMC 1543 / L948) (Mycobacterium abscessus).